The primary structure comprises 255 residues: 2,3-dehydroadipyl-CoA hydratase (255 aa).

The protein belongs to the enoyl-CoA hydratase/isomerase family.

It catalyses the reaction a (3S)-3-hydroxyacyl-CoA = a (2E)-enoyl-CoA + H2O. The catalysed reaction is a 4-saturated-(3S)-3-hydroxyacyl-CoA = a (3E)-enoyl-CoA + H2O. The protein operates within aromatic compound metabolism; phenylacetate degradation. Catalyzes the reversible conversion of enzymatically produced 2,3-dehydroadipyl-CoA into 3-hydroxyadipyl-CoA. This is 2,3-dehydroadipyl-CoA hydratase (paaF) from Escherichia coli (strain K12).